The primary structure comprises 219 residues: Orotate phosphoribosyltransferase (219 aa).

Position 26 (Lys-26) interacts with 5-phospho-alpha-D-ribose 1-diphosphate. Position 34-35 (34-35) interacts with orotate; sequence FF. Residues 72–73, Arg-98, Lys-99, Lys-102, His-104, and 124–132 contribute to the 5-phospho-alpha-D-ribose 1-diphosphate site; these read YK and DDVITAGTA. Orotate is bound by residues Thr-128 and Arg-156.

It belongs to the purine/pyrimidine phosphoribosyltransferase family. PyrE subfamily. As to quaternary structure, homodimer. It depends on Mg(2+) as a cofactor.

It carries out the reaction orotidine 5'-phosphate + diphosphate = orotate + 5-phospho-alpha-D-ribose 1-diphosphate. It participates in pyrimidine metabolism; UMP biosynthesis via de novo pathway; UMP from orotate: step 1/2. In terms of biological role, catalyzes the transfer of a ribosyl phosphate group from 5-phosphoribose 1-diphosphate to orotate, leading to the formation of orotidine monophosphate (OMP). The polypeptide is Orotate phosphoribosyltransferase (Xanthomonas campestris pv. campestris (strain 8004)).